The following is a 372-amino-acid chain: UDP-N-acetylglucosamine--N-acetylmuramyl-(pentapeptide) pyrophosphoryl-undecaprenol N-acetylglucosamine transferase (372 aa).

Residues Thr16–Gly18, Asn128, Arg164, Ser192, Ile250, and Gln295 each bind UDP-N-acetyl-alpha-D-glucosamine.

This sequence belongs to the glycosyltransferase 28 family. MurG subfamily.

It is found in the cell inner membrane. The enzyme catalyses di-trans,octa-cis-undecaprenyl diphospho-N-acetyl-alpha-D-muramoyl-L-alanyl-D-glutamyl-meso-2,6-diaminopimeloyl-D-alanyl-D-alanine + UDP-N-acetyl-alpha-D-glucosamine = di-trans,octa-cis-undecaprenyl diphospho-[N-acetyl-alpha-D-glucosaminyl-(1-&gt;4)]-N-acetyl-alpha-D-muramoyl-L-alanyl-D-glutamyl-meso-2,6-diaminopimeloyl-D-alanyl-D-alanine + UDP + H(+). The protein operates within cell wall biogenesis; peptidoglycan biosynthesis. Cell wall formation. Catalyzes the transfer of a GlcNAc subunit on undecaprenyl-pyrophosphoryl-MurNAc-pentapeptide (lipid intermediate I) to form undecaprenyl-pyrophosphoryl-MurNAc-(pentapeptide)GlcNAc (lipid intermediate II). The chain is UDP-N-acetylglucosamine--N-acetylmuramyl-(pentapeptide) pyrophosphoryl-undecaprenol N-acetylglucosamine transferase from Paraburkholderia phytofirmans (strain DSM 17436 / LMG 22146 / PsJN) (Burkholderia phytofirmans).